An 80-amino-acid polypeptide reads, in one-letter code: uncharacterized protein (80 aa).

The protein to B.cereus similar ORF in glnR 5'region.

This is an uncharacterized protein from Bacillus cereus.